Consider the following 615-residue polypeptide: Chaperone protein HtpG (615 aa).

Residues 1-335 are a; substrate-binding; sequence MSAEKQTHGF…APDLPLNVSR (335 aa). The b stretch occupies residues 336–541; sequence ELLQDYGPVQ…EDQLGPQMRR (206 aa). The c stretch occupies residues 542-615; the sequence is MLEAAGQPVP…RMQALLSQSV (74 aa).

Belongs to the heat shock protein 90 family. Homodimer.

It is found in the cytoplasm. Functionally, molecular chaperone. Has ATPase activity. This is Chaperone protein HtpG from Alcanivorax borkumensis (strain ATCC 700651 / DSM 11573 / NCIMB 13689 / SK2).